The following is a 217-amino-acid chain: Large ribosomal subunit protein uL3 (217 aa).

The disordered stretch occupies residues 129–162 (SRGPMSHGSKNHRAPGSTGAGTTPGRIYPGKRMA). Residues 142–153 (APGSTGAGTTPG) show a composition bias toward low complexity.

The protein belongs to the universal ribosomal protein uL3 family. As to quaternary structure, part of the 50S ribosomal subunit. Forms a cluster with proteins L14 and L19.

In terms of biological role, one of the primary rRNA binding proteins, it binds directly near the 3'-end of the 23S rRNA, where it nucleates assembly of the 50S subunit. This chain is Large ribosomal subunit protein uL3, found in Prochlorococcus marinus (strain MIT 9215).